The sequence spans 214 residues: Thiamine import ATP-binding protein ThiQ (214 aa).

Residues 2–212 (IKLNTIFDYP…KNGQATEREI (211 aa)) enclose the ABC transporter domain. ATP is bound at residue 31–38 (GESGAGKS).

It belongs to the ABC transporter superfamily. Thiamine importer (TC 3.A.1.19.1) family. In terms of assembly, the complex is composed of two ATP-binding proteins (ThiQ), two transmembrane proteins (ThiP) and a solute-binding protein (ThiB).

It localises to the cell inner membrane. The catalysed reaction is thiamine(out) + ATP + H2O = thiamine(in) + ADP + phosphate + H(+). Functionally, part of the ABC transporter complex ThiBPQ involved in thiamine import. Responsible for energy coupling to the transport system. This is Thiamine import ATP-binding protein ThiQ from Histophilus somni (strain 129Pt) (Haemophilus somnus).